Reading from the N-terminus, the 479-residue chain is Glycogen synthase (479 aa).

An ADP-alpha-D-glucose-binding site is contributed by lysine 15.

The protein belongs to the glycosyltransferase 1 family. Bacterial/plant glycogen synthase subfamily.

It catalyses the reaction [(1-&gt;4)-alpha-D-glucosyl](n) + ADP-alpha-D-glucose = [(1-&gt;4)-alpha-D-glucosyl](n+1) + ADP + H(+). Its pathway is glycan biosynthesis; glycogen biosynthesis. Synthesizes alpha-1,4-glucan chains using ADP-glucose. The chain is Glycogen synthase from Clostridium beijerinckii (strain ATCC 51743 / NCIMB 8052) (Clostridium acetobutylicum).